The chain runs to 339 residues: Anthranilate phosphoribosyltransferase (339 aa).

Residues Gly81, 84 to 85 (GD), Thr89, 91 to 94 (NIST), 109 to 117 (KHGNRNLSS), and Thr121 contribute to the 5-phospho-alpha-D-ribose 1-diphosphate site. Gly81 is an anthranilate binding site. Residue Ser93 participates in Mg(2+) binding. Asn112 is a binding site for anthranilate. Residue Arg167 participates in anthranilate binding. Mg(2+) contacts are provided by Asp226 and Glu227.

It belongs to the anthranilate phosphoribosyltransferase family. Homodimer. Requires Mg(2+) as cofactor.

It carries out the reaction N-(5-phospho-beta-D-ribosyl)anthranilate + diphosphate = 5-phospho-alpha-D-ribose 1-diphosphate + anthranilate. It functions in the pathway amino-acid biosynthesis; L-tryptophan biosynthesis; L-tryptophan from chorismate: step 2/5. In terms of biological role, catalyzes the transfer of the phosphoribosyl group of 5-phosphorylribose-1-pyrophosphate (PRPP) to anthranilate to yield N-(5'-phosphoribosyl)-anthranilate (PRA). This is Anthranilate phosphoribosyltransferase from Ruegeria pomeroyi (strain ATCC 700808 / DSM 15171 / DSS-3) (Silicibacter pomeroyi).